Consider the following 244-residue polypeptide: 14-3-3 protein homolog 1 (244 aa).

It belongs to the 14-3-3 family.

The polypeptide is 14-3-3 protein homolog 1 (Echinococcus granulosus (Hydatid tapeworm)).